The primary structure comprises 247 residues: Spermatogenesis-associated protein 46 (247 aa).

Residues 125 to 164 (QRDSCLPEDTADSVCSSSPSPENTCPREATKKSRPGPDTT) are disordered. The span at 137–147 (SVCSSSPSPEN) shows a compositional bias: polar residues.

The protein localises to the nucleus membrane. Its function is as follows. Plays a role in spermiogenesis and fertilization. The chain is Spermatogenesis-associated protein 46 (SPATA46) from Bos taurus (Bovine).